A 112-amino-acid chain; its full sequence is Peptidyl-tRNA hydrolase (112 aa).

Belongs to the PTH2 family.

The protein resides in the cytoplasm. The enzyme catalyses an N-acyl-L-alpha-aminoacyl-tRNA + H2O = an N-acyl-L-amino acid + a tRNA + H(+). Its function is as follows. The natural substrate for this enzyme may be peptidyl-tRNAs which drop off the ribosome during protein synthesis. This Haloquadratum walsbyi (strain DSM 16790 / HBSQ001) protein is Peptidyl-tRNA hydrolase.